Reading from the N-terminus, the 133-residue chain is Large ribosomal subunit protein bL17 (133 aa).

It belongs to the bacterial ribosomal protein bL17 family. As to quaternary structure, part of the 50S ribosomal subunit. Contacts protein L32.

The polypeptide is Large ribosomal subunit protein bL17 (Alteromonas mediterranea (strain DSM 17117 / CIP 110805 / LMG 28347 / Deep ecotype)).